The following is a 95-amino-acid chain: Neutrophil antibiotic peptide NP-5 (95 aa).

The first 19 residues, 1–19 (MRTLALLAAILLVTLQAQA), serve as a signal peptide directing secretion. The propeptide occupies 20–62 (ELHSGMADDGVDQQQPRAQDLDVAVYIKQDETSPLEVLGAKAG). 3 disulfide bridges follow: Cys65–Cys93, Cys67–Cys82, and Cys72–Cys92.

The protein belongs to the alpha-defensin family.

The protein resides in the secreted. In terms of biological role, microbicidal activity. The chain is Neutrophil antibiotic peptide NP-5 from Oryctolagus cuniculus (Rabbit).